Here is a 223-residue protein sequence, read N- to C-terminus: GrpE protein homolog, mitochondrial (223 aa).

Belongs to the GrpE family. In terms of assembly, component of the PAM complex, at least composed of mtHsp70, mge1, tim44, pam16, pam17 and pam18.

The protein localises to the mitochondrion matrix. Essential component of the PAM complex, a complex required for the translocation of transit peptide-containing proteins from the inner membrane into the mitochondrial matrix in an ATP-dependent manner. Seems to control the nucleotide-dependent binding of ssc1 to substrate proteins. This is GrpE protein homolog, mitochondrial (mge1) from Schizosaccharomyces pombe (strain 972 / ATCC 24843) (Fission yeast).